A 556-amino-acid chain; its full sequence is MQFDYIIIGAGSAGNVLATRLTEDPNTTVLLLEAGGPDYRFDFRTQMPAALAFPLQGKRYNWAYETEPEPFMNNRRMECGRGKGLGGSSLINGMCYIRGNALDLDNWAQEPGLENWSYLDCLPYYRKAETRDVGENDYHGGDGPVSVITSKPGVNPLFEAMIEAGMQAGYPRTDDLNGYQQEGFGPMDRTVTPHGRRASTARGYLDQAKSRPNLTIRTHAMTDHIIFDGKRAVGVEWLEGDSTIPTRAAANKEVLLCAGAIASPQILQRSGVGNAELLAEFDIPLVHELPGVGENLQDHLEMYLQYECKEPVSLYPALQWWNQPRIGAEWLFGGTGVGASNHFEAGGFIRSREEFAWPNIQYHFLPVAINYNGSNAVKEHGFQCHVGSMRSPSRGHVRIKSRDPHQHPAILFNYMSHEQDWQEFRDAIRTTREIMHQPALDQYRGREISPGVECQTDEQLDEFVRNHAETAFHPCGTCKMGYDEMAVVDGEGRVHGLEGLRVVDASIMPQIITGNLNATTIMIGEKIADMIRGKEALPRSTAGYFVANGMPVRAKK.

4-33 (DYIIIGAGSAGNVLATRLTEDPNTTVLLLE) is an FAD binding site. Histidine 473 serves as the catalytic Proton acceptor.

It belongs to the GMC oxidoreductase family. Requires FAD as cofactor.

The enzyme catalyses choline + A = betaine aldehyde + AH2. It carries out the reaction betaine aldehyde + NAD(+) + H2O = glycine betaine + NADH + 2 H(+). Its pathway is amine and polyamine biosynthesis; betaine biosynthesis via choline pathway; betaine aldehyde from choline (cytochrome c reductase route): step 1/1. In terms of biological role, involved in the biosynthesis of the osmoprotectant glycine betaine. Catalyzes the oxidation of choline to betaine aldehyde and betaine aldehyde to glycine betaine at the same rate. This chain is Oxygen-dependent choline dehydrogenase, found in Escherichia coli O127:H6 (strain E2348/69 / EPEC).